Here is a 59-residue protein sequence, read N- to C-terminus: Metallothionein-1B (59 aa).

The interval 1–29 (MPGPCCNDKCVCQEGGCKAGCQCTSCRCS) is beta. The a divalent metal cation site is built by C5, C6, C10, C17, C21, C23, C26, C28, C31, C34, C38, C40, C46, C50, C54, C56, and C57. Residues 30-59 (PCQKCTSGCKCATKEECSKTCTKPCSCCPK) are alpha.

It belongs to the metallothionein superfamily. Type 3 family.

Binds six divalent metal ions. Known to bind copper and cadmium. In Callinectes sapidus (Blue crab), this protein is Metallothionein-1B.